We begin with the raw amino-acid sequence, 255 residues long: MYIEVTGYGPALVLIHGWAMHSGVFAPLVEQLRAHHTLYLVDLPGHGYNHTTLTPLALPHVVHAIAAATPPAVWLGWSLGGLFALHAAATLPQVRGLIMLAATPCFVRREDWPHAVEVSIFTQFAEDLKQNYTETINRFLALDTLGSTYAQSELRQLRQILNARHTPNTATLQAGLELLAHTDLRRAVIDLTPPSLWIAGQRDRLVPAASIHAATALAPSGQTELLTITGGGHAPFLSHANQMTAALQHFIATLP.

Substrate-binding positions include W18, 78–79 (SL), and 139–143 (FLALD). S78 functions as the Nucleophile in the catalytic mechanism. Residues D203 and H233 contribute to the active site. H233 is a substrate binding site.

It belongs to the AB hydrolase superfamily. Carboxylesterase BioH family. Monomer.

Its subcellular location is the cytoplasm. The enzyme catalyses 6-carboxyhexanoyl-[ACP] methyl ester + H2O = 6-carboxyhexanoyl-[ACP] + methanol + H(+). Its pathway is cofactor biosynthesis; biotin biosynthesis. The physiological role of BioH is to remove the methyl group introduced by BioC when the pimeloyl moiety is complete. It allows to synthesize pimeloyl-ACP via the fatty acid synthetic pathway through the hydrolysis of the ester bonds of pimeloyl-ACP esters. This chain is Pimeloyl-[acyl-carrier protein] methyl ester esterase, found in Xylella fastidiosa (strain 9a5c).